We begin with the raw amino-acid sequence, 494 residues long: Ectonucleoside triphosphate diphosphohydrolase 8 (494 aa).

Residues 1–8 (MRLSWKER) lie on the Cytoplasmic side of the membrane. A helical transmembrane segment spans residues 9 to 29 (VFMVLLGVAAASGLTMLILIL). Over 30-465 (VKATNVLLPA…LTQWRAQSYS (436 aa)) the chain is Extracellular. A disulfide bridge connects residues Cys78 and Cys102. The active-site Proton acceptor is Glu168. Cys245 and Cys291 are joined by a disulfide. 2 N-linked (GlcNAc...) asparagine glycosylation sites follow: Asn299 and Asn303. Cys328 and Cys334 are oxidised to a cystine. N-linked (GlcNAc...) asparagine glycosylation occurs at Asn362. Cys380 and Cys402 are oxidised to a cystine. A helical transmembrane segment spans residues 466 to 486 (IWIAGVVFAVLTLVAILGAAA). The Cytoplasmic segment spans residues 487–494 (VQLFWTQD).

This sequence belongs to the GDA1/CD39 NTPase family. Ca(2+) is required as a cofactor. Requires Mg(2+) as cofactor. In terms of processing, N-glycosylated. Present in liver, and at lower level in jejunum and kidney. Limited to the canalicular domain of hepatocytes (at protein level).

It is found in the cell membrane. The enzyme catalyses a ribonucleoside 5'-triphosphate + 2 H2O = a ribonucleoside 5'-phosphate + 2 phosphate + 2 H(+). Canalicular ectonucleoside NTPDase responsible for the main hepatic NTPDase activity. Ectonucleoside NTPDases catalyze the hydrolysis of gamma- and beta-phosphate residues of nucleotides, playing a central role in concentration of extracellular nucleotides. Has activity toward ATP, ADP, UTP and UDP, but not toward AMP. This chain is Ectonucleoside triphosphate diphosphohydrolase 8 (Entpd8), found in Rattus norvegicus (Rat).